A 44-amino-acid chain; its full sequence is MKSKWMSGLLLVAVGFSFTQVMVHAGETANTEGKTFHIAARNQT.

The propeptide occupies 1-39; it reads MKSKWMSGLLLVAVGFSFTQVMVHAGETANTEGKTFHIA.

It belongs to the Phr family. In terms of assembly, interacts with RapA and inhibits its interaction with Spo0F. In terms of processing, secreted with a propeptide domain, which is cleaved in the cell wall by the secreted serine proteases subtilisin and Vpr to produce a mature signaling peptide. Contains a predicted signal peptide cleavage site in the N-terminal region, however the propeptide is probably subject to only one processing event, at the N-terminal end of the mature peptide.

The protein resides in the secreted. Its subcellular location is the cytoplasm. With respect to regulation, inhibition of RapA requires a free carboxylate group at the C-terminal end of the PhrA pentapeptide. A free C-terminal carboxylic acid PhrA pentapeptide inhibits RapA phosphatase activity at a 1:1 ratio and is approximately 200 fold more active than a C-terminal amide peptide. Its function is as follows. Signaling molecule involved in the regulation of sporulation. Secreted during production, but the mature peptide acts intracellularly, indicating that it needs to be imported into the cell to function. Inhibitor of the RapA phosphatase activity. Does not act on RapB. This chain is Phosphatase RapA inhibitor, found in Bacillus subtilis (strain 168).